The sequence spans 224 residues: PKHD-type hydroxylase tll1907 (224 aa).

Residues 77-176 enclose the Fe2OG dioxygenase domain; sequence KIIGPLLFSR…RLVAVAWVQS (100 aa). Fe cation-binding residues include His96, Asp98, and His157. Arg167 provides a ligand contact to 2-oxoglutarate.

Fe(2+) serves as cofactor. The cofactor is L-ascorbate.

This Thermosynechococcus vestitus (strain NIES-2133 / IAM M-273 / BP-1) protein is PKHD-type hydroxylase tll1907.